The following is a 156-amino-acid chain: Transcription elongation factor GreA (156 aa).

The stretch at glutamate 2–arginine 27 forms a coiled coil.

It belongs to the GreA/GreB family.

Necessary for efficient RNA polymerase transcription elongation past template-encoded arresting sites. The arresting sites in DNA have the property of trapping a certain fraction of elongating RNA polymerases that pass through, resulting in locked ternary complexes. Cleavage of the nascent transcript by cleavage factors such as GreA or GreB allows the resumption of elongation from the new 3'terminus. GreA releases sequences of 2 to 3 nucleotides. This Lactococcus lactis subsp. cremoris (strain SK11) protein is Transcription elongation factor GreA.